We begin with the raw amino-acid sequence, 276 residues long: Orotidine 5'-phosphate decarboxylase (276 aa).

Substrate contacts are provided by residues Asp40, 62–64 (KTH), 93–102 (DRKFIDIGNT), Tyr228, and Arg246. The Proton donor role is filled by Lys95.

Belongs to the OMP decarboxylase family.

It carries out the reaction orotidine 5'-phosphate + H(+) = UMP + CO2. It functions in the pathway pyrimidine metabolism; UMP biosynthesis via de novo pathway; UMP from orotate: step 2/2. This chain is Orotidine 5'-phosphate decarboxylase (pyrG), found in Penicillium nalgiovense.